The following is a 642-amino-acid chain: Threonine--tRNA ligase (642 aa).

The region spanning 1-63 (MNDITVTLPD…YNDARVVIVT (63 aa)) is the TGS domain. Positions 242-533 (DHRKIGQELD…LIEHFNGKFP (292 aa)) are catalytic. 3 residues coordinate Zn(2+): Cys-334, His-385, and His-510.

It belongs to the class-II aminoacyl-tRNA synthetase family. Homodimer. Zn(2+) is required as a cofactor.

Its subcellular location is the cytoplasm. It carries out the reaction tRNA(Thr) + L-threonine + ATP = L-threonyl-tRNA(Thr) + AMP + diphosphate + H(+). In terms of biological role, catalyzes the attachment of threonine to tRNA(Thr) in a two-step reaction: L-threonine is first activated by ATP to form Thr-AMP and then transferred to the acceptor end of tRNA(Thr). This is Threonine--tRNA ligase from Haloquadratum walsbyi (strain DSM 16790 / HBSQ001).